Consider the following 260-residue polypeptide: UPF0246 protein BamMC406_2140 (260 aa).

Belongs to the UPF0246 family.

The protein is UPF0246 protein BamMC406_2140 of Burkholderia ambifaria (strain MC40-6).